A 399-amino-acid chain; its full sequence is Acetate kinase 2 (399 aa).

Position 10 (Asn10) interacts with Mg(2+). Lys17 serves as a coordination point for ATP. Arg89 provides a ligand contact to substrate. Asp146 (proton donor/acceptor) is an active-site residue. Residues 206 to 210 (HLGNG), 281 to 283 (DCR), and 329 to 333 (GIGEN) contribute to the ATP site. Residue Glu384 participates in Mg(2+) binding.

Belongs to the acetokinase family. As to quaternary structure, homodimer. Mg(2+) serves as cofactor. The cofactor is Mn(2+).

The protein localises to the cytoplasm. The enzyme catalyses acetate + ATP = acetyl phosphate + ADP. Its pathway is metabolic intermediate biosynthesis; acetyl-CoA biosynthesis; acetyl-CoA from acetate: step 1/2. In terms of biological role, catalyzes the formation of acetyl phosphate from acetate and ATP. Can also catalyze the reverse reaction. The protein is Acetate kinase 2 of Neisseria meningitidis serogroup B (strain ATCC BAA-335 / MC58).